The sequence spans 133 residues: Profilin (133 aa).

Belongs to the profilin family. As to quaternary structure, occurs in many kinds of cells as a complex with monomeric actin in a 1:1 ratio.

Its subcellular location is the cytoplasm. It is found in the cytoskeleton. In terms of biological role, binds to actin and affects the structure of the cytoskeleton. At high concentrations, profilin prevents the polymerization of actin, whereas it enhances it at low concentrations. By binding to PIP2, it inhibits the formation of IP3 and DG. This Mercurialis annua (Annual mercury) protein is Profilin.